We begin with the raw amino-acid sequence, 332 residues long: Potassium channel subfamily K member 17 (332 aa).

At 1-20 (MYRPRARAAPEGRVRGCAVP) the chain is on the cytoplasmic side. Residues 21–43 (STVLLLLAYLAYLALGTGVFWTL) form a helical membrane-spanning segment. 2 N-linked (GlcNAc...) asparagine glycosylation sites follow: N65 and N94. An intramembrane region (pore-forming) is located at residues 106–124 (SFFFSVSTITTIGYGNLSP). 4 residues coordinate K(+): T116, I117, G118, and Y119. Positions 116–121 (TIGYGN) are selectivity filter 1. A helical transmembrane segment spans residues 128–148 (AARLFCIFFALVGIPLNLVVL). Residues 149–179 (NRLGHLMQQGVNHWASRLGGTWQDPDKARWL) lie on the Cytoplasmic side of the membrane. A helical membrane pass occupies residues 180-200 (AGSGALLSGLLLFLLLPPLLF). The pore-forming intramembrane region spans 211–230 (GFYFAFITLSTVGFGDYVIG). Positions 221, 222, 223, and 224 each coordinate K(+). Residues 221–226 (TVGFGD) form a selectivity filter 2 region. Residues 244–264 (MVSLWILFGMAWLALIIKLIL) traverse the membrane as a helical segment. Residues 265–332 (SQLETPGRVC…AHAAGCGKDS (68 aa)) are Cytoplasmic-facing. The disordered stretch occupies residues 287-312 (SQSWRQGPDREPESHSPQQGCYPEGP).

It belongs to the two pore domain potassium channel (TC 1.A.1.8) family. In terms of assembly, homodimer; disulfide-linked. Heterodimer with KCNK5 and KCNK16. As to expression, widely expressed. Highly expressed in aorta and coronary artery. Expressed in pancreas, in both endocrine (alpha, beta, gamma, delta, and epsilon) and exocrine (acinar and ductal) cells.

Its subcellular location is the cell membrane. It carries out the reaction K(+)(in) = K(+)(out). The enzyme catalyses Rb(+)(in) = Rb(+)(out). It catalyses the reaction Cs(+)(in) = Cs(+)(out). Its activity is regulated as follows. Inhibited by Ba(2+), quinidine, chloroform and halothane. Activated at alkaline pH. Activated by quinine and isoflurane. Functionally, k(+) channel that conducts voltage-dependent outward rectifying currents upon membrane depolarization. Voltage sensing is coupled to K(+) electrochemical gradient in an 'ion flux gating' mode where outward but not inward ion flow opens the gate. Homo- and heterodimerizes to form functional channels with distinct regulatory and gating properties. Present in the cardiac conduction system where it may regulate action potential duration and beating frequency of cardiac myocytes. Permeable to other monovalent cations such as Rb(+) and Cs(+). This Homo sapiens (Human) protein is Potassium channel subfamily K member 17.